Consider the following 297-residue polypeptide: Homoserine kinase (297 aa).

82 to 92 (PLTRGLGSSAS) contributes to the ATP binding site.

It belongs to the GHMP kinase family. Homoserine kinase subfamily.

The protein resides in the cytoplasm. It catalyses the reaction L-homoserine + ATP = O-phospho-L-homoserine + ADP + H(+). It functions in the pathway amino-acid biosynthesis; L-threonine biosynthesis; L-threonine from L-aspartate: step 4/5. Functionally, catalyzes the ATP-dependent phosphorylation of L-homoserine to L-homoserine phosphate. The chain is Homoserine kinase from Bacillus cereus (strain G9842).